The chain runs to 285 residues: MAGAGSEARFAGLSLVQLNELLEDEGQLTEMVQKMEETQNVQLNKEMTLASNRSLAEGNLLYQPQLDTLKARLTQKYQELQVLFEAYQIKKTKLDRQSSSASLETLLALLQAEGAKIEEDTENMAEKFLDGELPLDSFIDVYQSKRKLAHMRRVKIEKLQEMVLKGQRLPQALAPLPPRLPELAPTAPLPYPAPEASGPPAVAPRRIPPPPPPVPAGRLATPFTAAMSSGQAVPYPGLQCPPLPPRVGLPTQQGFSSQFVSPYPPPLPQRPPPRLPPHQPGFILQ.

Residues 50–170 (ASNRSLAEGN…EMVLKGQRLP (121 aa)) form an interaction with IST1 region. Positions 84–173 (FEAYQIKKTK…LKGQRLPQAL (90 aa)) constitute a VPS37 C-terminal domain. The interval 175–201 (PLPPRLPELAPTAPLPYPAPEASGPPA) is disordered. The residue at position 218 (R218) is an Omega-N-methylarginine. A disordered region spans residues 230–285 (GQAVPYPGLQCPPLPPRVGLPTQQGFSSQFVSPYPPPLPQRPPPRLPPHQPGFILQ). The segment covering 250 to 260 (PTQQGFSSQFV) has biased composition (polar residues). Pro residues predominate over residues 262–279 (PYPPPLPQRPPPRLPPHQ).

Belongs to the VPS37 family. As to quaternary structure, component of the ESCRT-I complex (endosomal sorting complex required for transport I) which consists of TSG101, VPS28, a VPS37 protein (VPS37A to -D) and MVB12A or MVB12B in a 1:1:1:1 stoichiometry. Interacts with TSG101, VPS28, MVB12A and MVB12B. Component of the ESCRT-I complex (endosomal sorting complex required for transport I) which consists of TSG101, VPS28, a VPS37 protein (VPS37A to -D) and UBAP1 in a 1:1:1:1 stoichiometry. Interacts with CEP55. Interacts with IST1. In terms of tissue distribution, widely expressed. Expressed in macrophages and lymphocytes.

It localises to the late endosome membrane. Its function is as follows. Component of the ESCRT-I complex, a regulator of vesicular trafficking process. Required for the sorting of endocytic ubiquitinated cargos into multivesicular bodies. May be involved in cell growth and differentiation. In Homo sapiens (Human), this protein is Vacuolar protein sorting-associated protein 37B (VPS37B).